A 418-amino-acid chain; its full sequence is eIF5-mimic protein 2-B (418 aa).

Over residues 1-15 (MSYQKQQKPTLTGQR) the composition is skewed to polar residues. The interval 1-29 (MSYQKQQKPTLTGQRFKTRKRDEKERFDP) is disordered. The W2 domain maps to 247 to 414 (NQQSLGARKE…KNAEEESESE (168 aa)).

Belongs to the BZW family.

Functionally, translation initiation regulator which may repress repeat-associated non-AUG (RAN) initiated translation probably by acting as a competitive inhibitor of eukaryotic translation initiation factor 5 (EIF5) function. Enhances histone H4 gene transcription but does not seem to bind DNA directly. In Danio rerio (Zebrafish), this protein is eIF5-mimic protein 2-B (bzw1b).